The primary structure comprises 311 residues: Meiotically up-regulated gene 146 protein (311 aa).

It localises to the cytoplasm. It is found in the nucleus. Functionally, has a role in sporulation. This is Meiotically up-regulated gene 146 protein (mug146) from Schizosaccharomyces pombe (strain 972 / ATCC 24843) (Fission yeast).